A 153-amino-acid polypeptide reads, in one-letter code: Endoribonuclease YbeY (153 aa).

His-118, His-122, and His-128 together coordinate Zn(2+).

The protein belongs to the endoribonuclease YbeY family. The cofactor is Zn(2+).

It localises to the cytoplasm. Functionally, single strand-specific metallo-endoribonuclease involved in late-stage 70S ribosome quality control and in maturation of the 3' terminus of the 16S rRNA. The sequence is that of Endoribonuclease YbeY from Oenococcus oeni (strain ATCC BAA-331 / PSU-1).